The chain runs to 554 residues: Glucose-6-phosphate isomerase 2 (554 aa).

E359 functions as the Proton donor in the catalytic mechanism. Active-site residues include H390 and K518.

It belongs to the GPI family.

It is found in the cytoplasm. It catalyses the reaction alpha-D-glucose 6-phosphate = beta-D-fructose 6-phosphate. It functions in the pathway carbohydrate biosynthesis; gluconeogenesis. It participates in carbohydrate degradation; glycolysis; D-glyceraldehyde 3-phosphate and glycerone phosphate from D-glucose: step 2/4. Functionally, catalyzes the reversible isomerization of glucose-6-phosphate to fructose-6-phosphate. This is Glucose-6-phosphate isomerase 2 from Pseudomonas putida (strain ATCC 47054 / DSM 6125 / CFBP 8728 / NCIMB 11950 / KT2440).